The chain runs to 442 residues: MRLSRYFLPILKENPKEAEIVSHRLMLRSGMIRQQSAGIYSWLPIGLKVLNKVCTIIREEQNRAGANEILMPTIQSADLWRESGRYDAYGKEMLRIQDRQKREMLFGPTNEEMVTDIFRSYVRSYKDLPLNLYHIQWKFRDEVRPRFGVMRSREFLMKDAYSFDLDYEGAKMAYYRMFVSYLRTFARVGLQAIPMRADTGPIGGDLSHEFIILAETGESQVYCDRAYLDLAVPGADTDFRNDAQLTDTVTRWTTPYAATDEMHDEADWAKVKPESQVSARGIEVGHIFHFGTKYSEPMGAKVQGPDGKEHLVSMGSYGIGPSRLVAAAIEASHDDAGIIWPKTIAPFGAGIVNMKPGDEGCDGVSEKLYEALTNAGVDPLLDDKDERPGAKFATIDLIGLPTQVIVGPRGVAAGEVEVKDRKTGERQSLGIEAAINMLTAQA.

This sequence belongs to the class-II aminoacyl-tRNA synthetase family. ProS type 2 subfamily. Homodimer.

It is found in the cytoplasm. The catalysed reaction is tRNA(Pro) + L-proline + ATP = L-prolyl-tRNA(Pro) + AMP + diphosphate. Functionally, catalyzes the attachment of proline to tRNA(Pro) in a two-step reaction: proline is first activated by ATP to form Pro-AMP and then transferred to the acceptor end of tRNA(Pro). The protein is Proline--tRNA ligase of Brucella melitensis biotype 2 (strain ATCC 23457).